The chain runs to 247 residues: ATP synthase subunit a, chloroplastic (247 aa).

5 consecutive transmembrane segments (helical) span residues 38–58 (QVLITSWVVITILLGSVVIAV), 95–115 (VPFIGTMFLFIFVSNWSGALL), 134–154 (INTTVALALLTSAAYFYAGLS), 199–219 (LVVVVLVSLVPLVVPIPVMFL), and 220–240 (GLFTSGIQALIFATLAAAYIG).

It belongs to the ATPase A chain family. In terms of assembly, F-type ATPases have 2 components, CF(1) - the catalytic core - and CF(0) - the membrane proton channel. CF(1) has five subunits: alpha(3), beta(3), gamma(1), delta(1), epsilon(1). CF(0) has four main subunits: a, b, b' and c.

It is found in the plastid. It localises to the chloroplast thylakoid membrane. Its function is as follows. Key component of the proton channel; it plays a direct role in the translocation of protons across the membrane. This Agrostis stolonifera (Creeping bentgrass) protein is ATP synthase subunit a, chloroplastic.